A 499-amino-acid polypeptide reads, in one-letter code: Alpha-amylase A type-3 (499 aa).

Residues 1–21 (MMVAWWSLFLYGLQVAAPALA) form the signal peptide. A disulfide bridge links Cys51 with Cys59. Trp104 is a binding site for substrate. Residue Asn142 coordinates Ca(2+). His143 is a substrate binding site. Residues Cys171 and Cys185 are joined by a disulfide bond. Positions 183 and 196 each coordinate Ca(2+). A glycan (N-linked (GlcNAc...) asparagine) is linked at Asn218. Arg225 provides a ligand contact to substrate. Ca(2+)-binding residues include Asp227, His231, and Glu251. Residue Asp227 is the Nucleophile of the active site. Residue 230-231 (KH) coordinates substrate. Glu251 (proton donor) is an active-site residue. A substrate-binding site is contributed by Gly255. Residues Cys261 and Cys304 are joined by a disulfide bond. Arg365 provides a ligand contact to substrate. The cysteines at positions 461 and 496 are disulfide-linked.

The protein belongs to the glycosyl hydrolase 13 family. As to quaternary structure, monomer. It depends on Ca(2+) as a cofactor.

It is found in the secreted. The catalysed reaction is Endohydrolysis of (1-&gt;4)-alpha-D-glucosidic linkages in polysaccharides containing three or more (1-&gt;4)-alpha-linked D-glucose units.. This is Alpha-amylase A type-3 (amy3) from Aspergillus oryzae (strain ATCC 42149 / RIB 40) (Yellow koji mold).